We begin with the raw amino-acid sequence, 271 residues long: Protein PXR1 (271 aa).

The 48-residue stretch at 25 to 72 (TSRFGHQFLEKFGWKPGMGLGLYPMNSNTSHIKVSIKDDNVGLGAKLK) folds into the G-patch domain. Residues 147–239 (SNAKKRKREG…SASNIPDAVN (93 aa)) are disordered. Acidic residues predominate over residues 157–168 (DDSEDEDDDDKE). A compositionally biased stretch (basic residues) spans 175-203 (KKHKKHKKHKKDKKKDKKDKKEHKKHKKE). The segment covering 204-221 (EKRLKKEKRAEKTKETKK) has biased composition (basic and acidic residues). Serine 230 carries the phosphoserine modification.

The protein belongs to the PINX1 family. In terms of assembly, interacts with EST2.

It localises to the nucleus. It is found in the nucleolus. Involved in rRNA-processing at A0, A1 and A2 sites through its action in U18 and U24 snoRNA 3'-end final trimming. Negative regulator of telomerase throughX competition for binding to EST2 with TLC1. This chain is Protein PXR1 (PXR1), found in Saccharomyces cerevisiae (strain YJM789) (Baker's yeast).